The primary structure comprises 615 residues: Dihydroxy-acid dehydratase (615 aa).

A Mg(2+)-binding site is contributed by Asp81. Position 122 (Cys122) interacts with [2Fe-2S] cluster. Mg(2+)-binding residues include Asp123 and Lys124. At Lys124 the chain carries N6-carboxylysine. A [2Fe-2S] cluster-binding site is contributed by Cys197. Residue Glu494 coordinates Mg(2+). Ser520 (proton acceptor) is an active-site residue.

This sequence belongs to the IlvD/Edd family. In terms of assembly, homodimer. [2Fe-2S] cluster is required as a cofactor. Requires Mg(2+) as cofactor.

It catalyses the reaction (2R)-2,3-dihydroxy-3-methylbutanoate = 3-methyl-2-oxobutanoate + H2O. It carries out the reaction (2R,3R)-2,3-dihydroxy-3-methylpentanoate = (S)-3-methyl-2-oxopentanoate + H2O. It participates in amino-acid biosynthesis; L-isoleucine biosynthesis; L-isoleucine from 2-oxobutanoate: step 3/4. Its pathway is amino-acid biosynthesis; L-valine biosynthesis; L-valine from pyruvate: step 3/4. Functionally, functions in the biosynthesis of branched-chain amino acids. Catalyzes the dehydration of (2R,3R)-2,3-dihydroxy-3-methylpentanoate (2,3-dihydroxy-3-methylvalerate) into 2-oxo-3-methylpentanoate (2-oxo-3-methylvalerate) and of (2R)-2,3-dihydroxy-3-methylbutanoate (2,3-dihydroxyisovalerate) into 2-oxo-3-methylbutanoate (2-oxoisovalerate), the penultimate precursor to L-isoleucine and L-valine, respectively. The chain is Dihydroxy-acid dehydratase from Salinispora arenicola (strain CNS-205).